The following is a 476-amino-acid chain: tRNA(Ile)-lysidine synthase (476 aa).

Position 25–30 (25–30) interacts with ATP; the sequence is SGGPDS.

This sequence belongs to the tRNA(Ile)-lysidine synthase family.

Its subcellular location is the cytoplasm. It catalyses the reaction cytidine(34) in tRNA(Ile2) + L-lysine + ATP = lysidine(34) in tRNA(Ile2) + AMP + diphosphate + H(+). In terms of biological role, ligates lysine onto the cytidine present at position 34 of the AUA codon-specific tRNA(Ile) that contains the anticodon CAU, in an ATP-dependent manner. Cytidine is converted to lysidine, thus changing the amino acid specificity of the tRNA from methionine to isoleucine. This chain is tRNA(Ile)-lysidine synthase, found in Bacillus licheniformis (strain ATCC 14580 / DSM 13 / JCM 2505 / CCUG 7422 / NBRC 12200 / NCIMB 9375 / NCTC 10341 / NRRL NRS-1264 / Gibson 46).